Reading from the N-terminus, the 78-residue chain is Large ribosomal subunit protein bL28 (78 aa).

Belongs to the bacterial ribosomal protein bL28 family.

The protein is Large ribosomal subunit protein bL28 of Erwinia tasmaniensis (strain DSM 17950 / CFBP 7177 / CIP 109463 / NCPPB 4357 / Et1/99).